The primary structure comprises 148 residues: Ubiquitin-conjugating enzyme E2-17 kDa (148 aa).

Residues 1 to 147 form the UBC core domain; sequence MASKRILKEL…ARSWTQKYAM (147 aa). The active-site Glycyl thioester intermediate is the Cys85.

Belongs to the ubiquitin-conjugating enzyme family.

It catalyses the reaction S-ubiquitinyl-[E1 ubiquitin-activating enzyme]-L-cysteine + [E2 ubiquitin-conjugating enzyme]-L-cysteine = [E1 ubiquitin-activating enzyme]-L-cysteine + S-ubiquitinyl-[E2 ubiquitin-conjugating enzyme]-L-cysteine.. It functions in the pathway protein modification; protein ubiquitination. Catalyzes the covalent attachment of ubiquitin to other proteins. Mediates the selective degradation of short-lived and abnormal proteins. The chain is Ubiquitin-conjugating enzyme E2-17 kDa from Solanum lycopersicum (Tomato).